The sequence spans 294 residues: Nucleotide-binding protein Smal_0950 (294 aa).

16–23 (GLSGSGKS) is a binding site for ATP. 69–72 (DVRG) is a binding site for GTP.

The protein belongs to the RapZ-like family.

Displays ATPase and GTPase activities. The polypeptide is Nucleotide-binding protein Smal_0950 (Stenotrophomonas maltophilia (strain R551-3)).